The sequence spans 557 residues: MNYKQPLIVKSQQQALSALRNLKMQTQDTHLNQFFSDDSGRFERFSVEQEQLVLDFSKHRIDQNVLNGLVDLAHAQDLTQWIQRLFSLEEINYTEQRAAMHWALRVPEQNQQVLPEITAQVHTQLERMYSLVEKIHAGQYRGATGEVIQDVVNIGVGGSDLGPLMVTHALSDFKVVTAKPLDVHFVSTMDGSQLSDLLHQLRPETTLFIISSKSFGTIDTLSNAQTVRQWLEKALGKNSHVLKHHFIGVSTKPDKMSEWGIAPENQLLLWDWVGGRYSLWSCIGLPIALTVGVDGFKQLLSGAYAIDQHFQTAPFAQNIPVLIGLLGVWNNNFLDIQTHAVLPYDGRLKYFAAYLQQLEMESNGKSTQRSGEKVDSATCPIVWGEVGPNAQHAFYQLLHQGTHKVSCDFIAPVKRYNANHFTYAENAEALIEQHHLALSNCLAQSRLLAFGNQALTADEIEDLPTYKQYEGNQPSSTILLKELNPYSLGMLIATYEHKVFVQSVLWNINPFDQWGVEKGKEIANQLLPILNREQDDLSTFDASTQGLLKILLGKNNG.

Glu-361 functions as the Proton donor in the catalytic mechanism. Residues His-392 and Lys-520 contribute to the active site.

Belongs to the GPI family.

Its subcellular location is the cytoplasm. It carries out the reaction alpha-D-glucose 6-phosphate = beta-D-fructose 6-phosphate. The protein operates within carbohydrate biosynthesis; gluconeogenesis. It functions in the pathway carbohydrate degradation; glycolysis; D-glyceraldehyde 3-phosphate and glycerone phosphate from D-glucose: step 2/4. Catalyzes the reversible isomerization of glucose-6-phosphate to fructose-6-phosphate. This chain is Glucose-6-phosphate isomerase, found in Acinetobacter venetianus (strain ATCC 31012 / DSM 23050 / BCRC 14357 / CCUG 45561 / CIP 110063 / KCTC 2702 / LMG 19082 / RAG-1).